The primary structure comprises 306 residues: Diterpene cyclase eriG (306 aa).

2 helical membrane passes run Ile-13–Ala-33 and Ala-43–Phe-63. Residue Asn-64 is glycosylated (N-linked (GlcNAc...) asparagine). 4 helical membrane passes run Phe-115–Gly-135, Ile-161–Leu-181, Leu-213–Phe-233, and Met-265–Leu-285.

This sequence belongs to the UbiA prenyltransferase family. Mg(2+) serves as cofactor.

Its subcellular location is the membrane. The catalysed reaction is (2E,6E,10E)-geranylgeranyl diphosphate = (-)-cyatha-3,12-diene + diphosphate. The protein operates within secondary metabolite biosynthesis. Its activity is regulated as follows. EDTA completely blocks the reaction. In terms of biological role, diterpene cyclase; part of the gene cluster that mediates the biosynthesis of erinacines, cyathane-xylosides that show unique biological activities, including leishmanicidal activity, stimulating activity for nerve growth-factor synthesis, and agonistic activity toward the kappa opioid receptor. Within the pathway, eriG acts as a diterpene cyclase that converts geranylgeranyl diphosphate (GGPP) into cyatha-3,12-diene. EriG is unable to use geranyl diphosphate (GPP) or farnesyl diphosphate (FPP) as substrates. The first step of the erinacines biosynthesis pathway is catalyzed by the geranylgeranyl diphosphate (GGPP) synthase eriE via conversion of farnesyl pyrophosphate and isopentyl pyrophosphate into geranylgeranyl pyrophosphate (GGPP). GGPP is then substrate of the diterpene cyclase eriG for the production of cyatha-3,12-diene. The cytochrome P450 monooxygenase eriI then hydroxylates cyatha-3,12-diene at C-14 of the seven-membered ring to produce erinacol, which is further hydroxylated at C-15 by the cytochrome P450 monooxygenase eriC to yield cyathadiol. The cytochrome P450 monooxygenase eriA then catalyzes C-11 hydroxylation in the presence of the short chain dehydrogenase/reductase (SDR) eriH, which leads to the production of cyathatriol. The acetyltransferase eriL converts cyathatriol into 11-O-acetyl-cyathatriol. The SDR eriH catalyzes further oxidation of 11-O-acetyl-cyathatriol into 1-O-acetylcyathin A3. Finally, the glycosyl transferase eriJ tranfers xylose from UDP-xylose onto C-14 of 11-O-acetyl-cyathatriol to form eracine Q. EriJ is also able to convert 11-O-acetyl-cyathatriol to eracine Q2 by using UDP-D-glucose as cosubstrate, but at a lower rate. The polypeptide is Diterpene cyclase eriG (Hericium erinaceus (Lion's mane mushroom)).